The following is a 459-amino-acid chain: Autophagy-related protein 18 (459 aa).

2 WD repeats span residues 1–39 and 188–228; these read MTSPALNFITFNQDHSCLAVGTSKGFRIYHTDPFSRIFS and AHRS…KLYQ. The interval 229–232 is necessary for proper localization to vacuole membrane; sequence FRRG. Positions 229–233 match the L/FRRG motif motif; that stretch reads FRRGT. The WD 3 repeat unit spans residues 233–272; that stretch reads TYPSTIYSMSFNLSSTLLCVSSTSDTIHIFRLGAPPGNTT. The disordered stretch occupies residues 264-339; sequence LGAPPGNTTP…RGSGSFSSML (76 aa). Residues 265–277 are compositionally biased toward low complexity; that stretch reads GAPPGNTTPAGAP. A compositionally biased stretch (basic and acidic residues) spans 285–296; the sequence is RQDRWSRARSYD. The span at 319-330 shows a compositional bias: gly residues; it reads PGAGNNQGGHTR. A WD 4 repeat occupies 393–433; it reads APGGPLRSVVAMSSSSPQVMVVTSDGGFYVYNIDMEHGGEG.

The protein belongs to the WD repeat PROPPIN family. Component of the PI(3,5)P2 regulatory complex. Interacts with ATG2 and ATG9. The ATG2-ATG18 complex is essential for autophagosome formation.

It localises to the preautophagosomal structure membrane. The protein resides in the vacuole membrane. The protein localises to the endosome membrane. Component of the PI(3,5)P2 regulatory complex that regulates both the synthesis and turnover of phosphatidylinositol 3,5-bisphosphate (PtdIns(3,5)P2). Plays an important role in osmotically-induced vacuole fragmentation. Required for cytoplasm to vacuole transport (Cvt) vesicle formation, pexophagy and starvation-induced autophagy. Involved in correct ATG9 trafficking to the pre-autophagosomal structure. With ATG2, protects ATG8 from ATG4-mediated cleavage. Autophagy is required for proper vegetative growth, asexual/sexual reproduction, and full virulence. Autophagy is particularly involved in the biosynthesis of deoxynivalenol (DON), an important virulence determinant. The protein is Autophagy-related protein 18 of Gibberella zeae (strain ATCC MYA-4620 / CBS 123657 / FGSC 9075 / NRRL 31084 / PH-1) (Wheat head blight fungus).